We begin with the raw amino-acid sequence, 205 residues long: Urease accessory protein UreG (205 aa).

11–18 provides a ligand contact to GTP; it reads GPVGSGKT.

The protein belongs to the SIMIBI class G3E GTPase family. UreG subfamily. Homodimer. UreD, UreF and UreG form a complex that acts as a GTP-hydrolysis-dependent molecular chaperone, activating the urease apoprotein by helping to assemble the nickel containing metallocenter of UreC. The UreE protein probably delivers the nickel.

It localises to the cytoplasm. Functionally, facilitates the functional incorporation of the urease nickel metallocenter. This process requires GTP hydrolysis, probably effectuated by UreG. In Prochlorococcus marinus (strain NATL2A), this protein is Urease accessory protein UreG.